The sequence spans 386 residues: Innexin inx4 (386 aa).

Residues 1-21 are Cytoplasmic-facing; that stretch reads MLEFVRPLQSILQIKQVNSTD. A helical transmembrane segment spans residues 22-42; that stretch reads LVWRLHCRVTVFLLLLASLLL. At 43 to 111 the chain is on the extracellular side; it reads SARQYFGNPI…ESERSYQKYY (69 aa). The chain crosses the membrane as a helical span at residues 112–132; the sequence is QWVVFILALQACMFSVPNFLW. Over 133–187 the chain is Cytoplasmic; the sequence is KAWEAGRLQSLCDGLTTPIVPDHWEKTRKKQLITYLSADFPRLHRTYLLRYCFCT. The chain crosses the membrane as a helical span at residues 188-208; it reads LLNFCNVLLNIFLVNVIFSGF. Topologically, residues 209-272 are extracellular; the sequence is WSNYHPAVKA…LNVVNEKIFA (64 aa). Residues 273–293 traverse the membrane as a helical segment; the sequence is FIWLWFLGLLVISMLNLLFWI. Over 294 to 386 the chain is Cytoplasmic; the sequence is VVLCSKGFRL…DPEGYDEEGV (93 aa). A disordered region spans residues 358-386; that stretch reads HNGHKTFRMPKGGEPDFYTDPEGYDEEGV. Positions 374–386 are enriched in acidic residues; it reads FYTDPEGYDEEGV.

It belongs to the pannexin family.

The protein localises to the cell membrane. It is found in the cell junction. Its subcellular location is the gap junction. In terms of biological role, structural component of gap junctions. Required for normal development of ovary. Required for normal egg production after blood meal. Required for normal development of testis. (Microbial infection) Modulates the development of Plasmodium falciparum oocysts. This chain is Innexin inx4, found in Anopheles gambiae (African malaria mosquito).